Consider the following 244-residue polypeptide: Phosphatidylinositol phosphate synthase (244 aa).

The next 3 membrane-spanning stretches (helical) occupy residues 24–42 (YARAFFTRVLTPFAAFLIR), 49–66 (TVTLLGTAGVIAGALVFY), and 72–91 (FWGTIVITLFVFSDLVDGNM). 48–51 (DTVT) serves as a coordination point for a CDP-1,2-diacyl-sn-glycerol. Mg(2+) is bound by residues aspartate 85 and aspartate 88. Residues glycine 89, arginine 93, and serine 99 each contribute to the a CDP-1,2-diacyl-sn-glycerol site. Mg(2+) contacts are provided by aspartate 106 and aspartate 110. Aspartate 110 functions as the Proton acceptor in the catalytic mechanism. Transmembrane regions (helical) follow at residues 117–137 (IFGGFALWYAGGGDNNVLCAV), 174–190 (LVISLVAAGFAGLHKFG), and 196–214 (VLLPIALWIVAVGSLVTLI).

This sequence belongs to the CDP-alcohol phosphatidyltransferase class-I family. In terms of assembly, homodimer. It depends on Mg(2+) as a cofactor.

It is found in the cell membrane. The enzyme catalyses a CDP-1,2-diacyl-sn-glycerol + 1D-myo-inositol 3-phosphate = a 1,2-diacyl-sn-glycero-3-phospho-(1D-myo-inositol-3-phosphate) + CMP + H(+). The catalysed reaction is 1,2-di-(9Z-octadecenoyl)-sn-glycero-3-cytidine-5'-diphosphate + 1D-myo-inositol 3-phosphate = 1,2-di-(9Z-octadecenoyl)-sn-glycero-3-phospho-(1D-myo-inositol-3-phosphate) + CMP + H(+). Its pathway is phospholipid metabolism; phosphatidylinositol phosphate biosynthesis. In terms of biological role, catalyzes the conjugation of the 1'-hydroxyl group of D-myo-inositol-3-phosphate (also named L-myo-inositol-1-phosphate) with a lipid tail of cytidine diphosphate diacylglycerol (CDP-DAG), forming phosphatidylinositol phosphate (PIP) and CMP. PIP is a precursor of phosphatidylinositol (PI) which is an essential lipid required for cell wall formation. The sequence is that of Phosphatidylinositol phosphate synthase from Streptomyces avermitilis (strain ATCC 31267 / DSM 46492 / JCM 5070 / NBRC 14893 / NCIMB 12804 / NRRL 8165 / MA-4680).